The following is a 155-amino-acid chain: Aspartate carbamoyltransferase regulatory chain (155 aa).

Zn(2+) contacts are provided by C113, C118, C141, and C144.

The protein belongs to the PyrI family. Contains catalytic and regulatory chains. Zn(2+) serves as cofactor.

Its function is as follows. Involved in allosteric regulation of aspartate carbamoyltransferase. This Methanococcus aeolicus (strain ATCC BAA-1280 / DSM 17508 / OCM 812 / Nankai-3) protein is Aspartate carbamoyltransferase regulatory chain.